The primary structure comprises 292 residues: Elongation factor Ts (292 aa).

The involved in Mg(2+) ion dislocation from EF-Tu stretch occupies residues 81 to 84 (TDFV).

It belongs to the EF-Ts family.

The protein resides in the cytoplasm. Associates with the EF-Tu.GDP complex and induces the exchange of GDP to GTP. It remains bound to the aminoacyl-tRNA.EF-Tu.GTP complex up to the GTP hydrolysis stage on the ribosome. The polypeptide is Elongation factor Ts (Acidithiobacillus ferrooxidans (strain ATCC 23270 / DSM 14882 / CIP 104768 / NCIMB 8455) (Ferrobacillus ferrooxidans (strain ATCC 23270))).